The following is a 250-amino-acid chain: Mycofactocin precursor peptide peptidase (250 aa).

A divalent metal cation-binding residues include Glu-38, His-40, Asp-49, His-127, and Glu-166.

The protein belongs to the creatininase superfamily. Homooctamer. The cofactor is Fe(2+). Zn(2+) serves as cofactor.

It carries out the reaction [mycofactocin precursor peptide]-C-terminal glycyl-N-{5-[(4-hydroxyphenyl)methyl]-4,4-dimethyl-2-oxopyrrolidin-3-yl}acetamide + H2O = [mycofactocin precursor peptide]-C-terminal glycine + 3-amino-5-[(4-hydroxyphenyl)methyl]-4,4-dimethyl-2-pyrrolidin-2-one. Its function is as follows. Peptidase involved in the biosynthesis of the enzyme cofactor mycofactocin (MFT). Catalyzes cleavage of the MftC-modified MftA peptide to liberate its final two residues, which consist of a cross-linked valine-decarboxylated tyrosine dipeptide (named 3-amino-5-[(4-hydroxyphenyl)methyl]-4,4-dimethyl-2-pyrrolidin-2-one or ADHP). This is Mycofactocin precursor peptide peptidase from Mycobacterium ulcerans (strain Agy99).